The primary structure comprises 207 residues: Thiamine-phosphate synthase (207 aa).

Residues 36–40 (QLRMK) and Asn68 each bind 4-amino-2-methyl-5-(diphosphooxymethyl)pyrimidine. Residues Asp69 and Asp88 each coordinate Mg(2+). Ser106 is a binding site for 4-amino-2-methyl-5-(diphosphooxymethyl)pyrimidine. 132–134 (TNT) is a 2-[(2R,5Z)-2-carboxy-4-methylthiazol-5(2H)-ylidene]ethyl phosphate binding site. Position 135 (Lys135) interacts with 4-amino-2-methyl-5-(diphosphooxymethyl)pyrimidine. 2-[(2R,5Z)-2-carboxy-4-methylthiazol-5(2H)-ylidene]ethyl phosphate-binding positions include Gly162 and 182–183 (VS).

Belongs to the thiamine-phosphate synthase family. It depends on Mg(2+) as a cofactor.

The catalysed reaction is 2-[(2R,5Z)-2-carboxy-4-methylthiazol-5(2H)-ylidene]ethyl phosphate + 4-amino-2-methyl-5-(diphosphooxymethyl)pyrimidine + 2 H(+) = thiamine phosphate + CO2 + diphosphate. It carries out the reaction 2-(2-carboxy-4-methylthiazol-5-yl)ethyl phosphate + 4-amino-2-methyl-5-(diphosphooxymethyl)pyrimidine + 2 H(+) = thiamine phosphate + CO2 + diphosphate. The enzyme catalyses 4-methyl-5-(2-phosphooxyethyl)-thiazole + 4-amino-2-methyl-5-(diphosphooxymethyl)pyrimidine + H(+) = thiamine phosphate + diphosphate. The protein operates within cofactor biosynthesis; thiamine diphosphate biosynthesis; thiamine phosphate from 4-amino-2-methyl-5-diphosphomethylpyrimidine and 4-methyl-5-(2-phosphoethyl)-thiazole: step 1/1. In terms of biological role, condenses 4-methyl-5-(beta-hydroxyethyl)thiazole monophosphate (THZ-P) and 2-methyl-4-amino-5-hydroxymethyl pyrimidine pyrophosphate (HMP-PP) to form thiamine monophosphate (TMP). The sequence is that of Thiamine-phosphate synthase from Methanococcus maripaludis (strain DSM 14266 / JCM 13030 / NBRC 101832 / S2 / LL).